Here is an 812-residue protein sequence, read N- to C-terminus: Probable E3 ubiquitin-protein ligase hulA (812 aa).

One can recognise a C2 domain in the interval 1–109 (MTCSQPNLRV…QMGGDEMLTR (109 aa)). Disordered stretches follow at residues 131–235 (NLST…WERR) and 250–350 (RTTT…YFVD). Polar residues-rich tracts occupy residues 148-165 (MQPS…ASTP), 174-199 (ADPT…STIV), 214-223 (SRTNLSSFED), and 250-267 (RTTT…QTSR). Positions 226–259 (GRLPAGWERREDNLGRTYYVDHNTRTTTWTRPSN) constitute a WW 1 domain. Residues 276–291 (LERRAHQSRMLPEDRT) show a composition bias toward basic and acidic residues. Polar residues predominate over residues 292-306 (GASSPNLQENQQQAQ). Residues 307 to 330 (TPPAGGSASAVSMMATGATTAGTG) show a composition bias toward low complexity. 2 WW domains span residues 330-363 (GELP…DPRR) and 390-423 (GPLP…DPRL). Positions 479–812 (SASDLKKRLM…VEETLGFGQE (334 aa)) constitute an HECT domain. The active-site Glycyl thioester intermediate is C780.

The protein belongs to the RSP5/NEDD4 family. In terms of assembly, interacts with creD.

It localises to the cytoplasm. The catalysed reaction is S-ubiquitinyl-[E2 ubiquitin-conjugating enzyme]-L-cysteine + [acceptor protein]-L-lysine = [E2 ubiquitin-conjugating enzyme]-L-cysteine + N(6)-ubiquitinyl-[acceptor protein]-L-lysine.. It participates in protein modification; protein ubiquitination. Its function is as follows. E3 ubiquitin-protein ligase which accepts ubiquitin from an E2 ubiquitin-conjugating enzyme in the form of a thioester and then directly transfers the ubiquitin to targeted substrates. Probably involved in the regulatory network controlling carbon source utilization. In Aspergillus flavus (strain ATCC 200026 / FGSC A1120 / IAM 13836 / NRRL 3357 / JCM 12722 / SRRC 167), this protein is Probable E3 ubiquitin-protein ligase hulA (hulA).